A 338-amino-acid polypeptide reads, in one-letter code: mRNA decay activator protein ZFP36L1 (338 aa).

Residues 1-111 form a necessary and sufficient for the association with mRNA decay enzymes and mRNA decay activation region; that stretch reads MTTTLVSATI…QKQPGSGQVN (111 aa). At Ser54 the chain carries Phosphoserine; by MAPKAPK2. Residue Ser90 is modified to Phosphoserine; by PKB/AKT1. Phosphoserine; by PKB/AKT1 and MAPKAPK2 is present on Ser92. The disordered stretch occupies residues 93-113; the sequence is EGGERLLPTQKQPGSGQVNSS. Residues 101 to 113 are compositionally biased toward polar residues; it reads TQKQPGSGQVNSS. 2 consecutive C3H1-type zinc fingers follow at residues 114-142 and 152-180; these read RYKTELCRPFEENGACKYGDKCQFAHGIH and KYKTELCRTFHTIGFCPYGPRCHFIHNAE. Residues 185–338 are necessary for mRNA decay activation; the sequence is LAGGRDLSAD…IFSRLSISDD (154 aa). Ser203 carries the phosphoserine; by PKB/AKT1 and MAPKAPK2 modification. Residues 273–338 form a disordered region; sequence SPTTFLFRPM…IFSRLSISDD (66 aa). A compositionally biased stretch (low complexity) spans 305–318; the sequence is YLSSSSSSHSGSDS. Ser318 carries the phosphoserine modification. Ser334 carries the phosphoserine; by RPS6KA1 modification.

Associates with the cytoplasmic CCR4-NOT deadenylase and RNA exosome complexes to trigger ARE-containing mRNA deadenylation and decay processes. Interacts with CNOT1. Interacts (via N-terminus) with CNOT6. Interacts with CNOT7; this interaction is inhibited in response to phorbol 12-myristate 13-acetate (PMA) treatment in a p38 MAPK-dependent manner. Interacts with DCP1A. Interacts (via N-terminus) with DCP2. Interacts (via N-terminus) with EXOSC2. Interacts with XRN1. Interacts (via phosphorylated form) with YWHAB; this interaction occurs in a protein kinase AKT1-dependent manner. Interacts (via phosphorylated form) with YWHAZ; this interaction occurs in a p38 MAPK- and AKT-signaling pathways. Phosphorylated. Phosphorylated by RPS6KA1 at Ser-334 upon phorbol 12-myristate 13-acetate (PMA) treatment; this phosphorylation results in dissociation of the CCR4-NOT deadenylase complex and induces p38 MAPK-mediated stabilization of the low-density lipoprotein receptor LDLR mRNA. Phosphorylated by protein kinase AKT1 at Ser-92 and Ser-203 in response to insulin; these phosphorylations stabilize ZFP36L1, increase the association with 14-3-3 proteins and mediate ARE-containing mRNA stabilization. AKT1-mediated phosphorylation at Ser-92 does not impair ARE-containing RNA-binding. Phosphorylated at Ser-54, Ser-92 and Ser-203 by MAPKAPK2; these phosphorylations increase the association with 14-3-3 proteins and mediate ARE-containing mRNA stabilization in a protein kinase AKT1-independent manner. MAPKAPK2-mediated phosphorylations at Ser-54, Ser-92 and Ser-203 do not impair ARE-containing RNA-binding. Phosphorylations increase the association with 14-3-3 proteins and mediate ARE-containing mRNA stabilization during early adipogenesis in a p38 MAPK- and AKT-dependent manner. Phosphorylated by protein kinase AKT1 at Ser-92. In terms of processing, ubiquitinated. Ubiquitination leads to proteasomal degradation, a process inhibited by phosphorylations at Ser-90, Ser-92 and Ser-203.

It localises to the nucleus. It is found in the cytoplasm. The protein resides in the cytoplasmic granule. Its subcellular location is the P-body. In terms of biological role, zinc-finger RNA-binding protein that destabilizes several cytoplasmic AU-rich element (ARE)-containing mRNA transcripts by promoting their poly(A) tail removal or deadenylation, and hence provide a mechanism for attenuating protein synthesis. Acts as a 3'-untranslated region (UTR) ARE mRNA-binding adapter protein to communicate signaling events to the mRNA decay machinery. Functions by recruiting the CCR4-NOT deadenylase complex and components of the cytoplasmic RNA decay machinery to the bound ARE-containing mRNAs, and hence promotes ARE-mediated mRNA deadenylation and decay processes. Also induces the degradation of ARE-containing mRNAs even in absence of poly(A) tail. Binds to 3'-UTR ARE of numerous mRNAs. Positively regulates early adipogenesis by promoting ARE-mediated mRNA decay of immediate early genes (IEGs). Promotes ARE-mediated mRNA decay of mineralocorticoid receptor NR3C2 mRNA in response to hypertonic stress. Negatively regulates hematopoietic/erythroid cell differentiation by promoting ARE-mediated mRNA decay of the transcription factor STAT5B mRNA. Positively regulates monocyte/macrophage cell differentiation by promoting ARE-mediated mRNA decay of the cyclin-dependent kinase CDK6 mRNA. Promotes degradation of ARE-containing pluripotency-associated mRNAs in embryonic stem cells (ESCs), such as NANOG, through a fibroblast growth factor (FGF)-induced MAPK-dependent signaling pathway, and hence attenuates ESC self-renewal and positively regulates mesendoderm differentiation. May play a role in mediating pro-apoptotic effects in malignant B-cells by promoting ARE-mediated mRNA decay of BCL2 mRNA. In association with ZFP36L2 maintains quiescence on developing B lymphocytes by promoting ARE-mediated decay of several mRNAs encoding cell cycle regulators that help B cells progress through the cell cycle, and hence ensuring accurate variable-diversity-joining (VDJ) recombination and functional immune cell formation. Together with ZFP36L2 is also necessary for thymocyte development and prevention of T-cell acute lymphoblastic leukemia (T-ALL) transformation by promoting ARE-mediated mRNA decay of the oncogenic transcription factor NOTCH1 mRNA. Participates in the delivery of target ARE-mRNAs to processing bodies (PBs). In addition to its cytosolic mRNA-decay function, plays a role in the regulation of nuclear mRNA 3'-end processing; modulates mRNA 3'-end maturation efficiency of the DLL4 mRNA through binding with an ARE embedded in a weak noncanonical polyadenylation (poly(A)) signal in endothelial cells. Also involved in the regulation of stress granule (SG) and P-body (PB) formation and fusion. Plays a role in vasculogenesis and endocardial development. Plays a role in the regulation of keratinocyte proliferation, differentiation and apoptosis. Plays a role in myoblast cell differentiation. This is mRNA decay activator protein ZFP36L1 from Rattus norvegicus (Rat).